The chain runs to 310 residues: Probable GTP 3',8-cyclase (310 aa).

The region spanning 5-218 (KYGRSLQKLR…VNIIFELGGR (214 aa)) is the Radical SAM core domain. Arg14 lines the GTP pocket. The [4Fe-4S] cluster site is built by Cys21, Cys25, and Cys28. Lys62 is a GTP binding site. Gly66 serves as a coordination point for S-adenosyl-L-methionine. A GTP-binding site is contributed by Thr91. Residue Ser115 participates in S-adenosyl-L-methionine binding. GTP is bound at residue Lys153. Residues Cys251, Cys254, and Cys268 each coordinate [4Fe-4S] cluster.

Belongs to the radical SAM superfamily. MoaA family. [4Fe-4S] cluster is required as a cofactor.

It carries out the reaction GTP + AH2 + S-adenosyl-L-methionine = (8S)-3',8-cyclo-7,8-dihydroguanosine 5'-triphosphate + 5'-deoxyadenosine + L-methionine + A + H(+). Its pathway is cofactor biosynthesis; molybdopterin biosynthesis. Catalyzes the cyclization of GTP to (8S)-3',8-cyclo-7,8-dihydroguanosine 5'-triphosphate. The protein is Probable GTP 3',8-cyclase of Pyrobaculum aerophilum (strain ATCC 51768 / DSM 7523 / JCM 9630 / CIP 104966 / NBRC 100827 / IM2).